Consider the following 662-residue polypeptide: MPHEMEENGAEVSDVMSENEDDTETFLKDDEKMTEQSTTDSTTEVKKKYDPKDPLRPRRKKARRACFACQRAHLTCGDERPCQRCIKRGLADACQDGVRKKAKYLHDAPPEALRPVLGPNYNPTPTPSRTNGHRHSSSQSDNLSATGSNFFSQGSTASLPVYSAGAQTPVAIDGLPSFNPQTSPTSFQGPINNAAHTPMNNMMPAGNMDFNALFDPSNPALYNFDLEGLNFGSQYAGWEFGILNKMALGAETPPRENSMSQTPTTEANYAALFGNANNGFDHPMLGADFSGMDQNNQSLYAQGNLQHGLPHAYAIAAGPTSLASPSTDTTASPHSVAGMDGSPNHNFAGIPTVPAATRPRPKHNKAGPKSILGKRQRDSAAIYESVKEPYPYTTGFHNMVAVLRNRLPGNKLLRIAKALGEIRPSFISCTKDLTRQDLVFMEKCFQRTLVEYDDFLQHCCAPTIVCRRSGEVAAVNKEFTALTGWTKDVLLGKEPNLNVNVYSGRSTNGTNTPDHNSQGEMTTPRPQRAMLDLSGGRPQPVFLGELLDDDSVVEFYQDFSQLAFEDSRGKVQRSCRLNKYRAPQDPDQKEPGSQKDAQPGILSSRVTRIDGSHGISRIEKDGKVECTYCWTIKRDVFDIPMMIIINFLPRYLPDQGPQQLAV.

The tract at residues 1-61 is disordered; the sequence is MPHEMEENGA…KDPLRPRRKK (61 aa). Basic and acidic residues-rich tracts occupy residues 25–34 and 43–56; these read TFLKDDEKMT and TEVK…DPLR. The segment at residues 66-94 is a DNA-binding region (zn(2)-C6 fungal-type); it reads CFACQRAHLTCGDERPCQRCIKRGLADAC. 3 disordered regions span residues 105-149, 502-524, and 580-606; these read LHDA…TGSN, YSGR…MTTP, and YRAP…SSRV. Polar residues-rich tracts occupy residues 121 to 130 and 137 to 149; these read YNPTPTPSRT and SSQS…TGSN. In terms of domain architecture, PAS spans 448–519; it reads TLVEYDDFLQ…TNTPDHNSQG (72 aa). Residues 582–593 show a composition bias toward basic and acidic residues; it reads APQDPDQKEPGS.

This sequence belongs to the ERT1/acuK family.

Its subcellular location is the nucleus. Transcription factor which regulates nonfermentable carbon utilization. Activator of gluconeogenetic genes. The polypeptide is Transcription activator of gluconeogenesis NECHADRAFT_59099 (Fusarium vanettenii (strain ATCC MYA-4622 / CBS 123669 / FGSC 9596 / NRRL 45880 / 77-13-4) (Fusarium solani subsp. pisi)).